The sequence spans 251 residues: Triosephosphate isomerase (251 aa).

9-11 lines the substrate pocket; sequence NWK. Catalysis depends on His96, which acts as the Electrophile. Glu168 serves as the catalytic Proton acceptor. Substrate contacts are provided by residues Gly174, Ser214, and 235-236; that span reads GG.

It belongs to the triosephosphate isomerase family. In terms of assembly, homodimer.

The protein resides in the cytoplasm. The enzyme catalyses D-glyceraldehyde 3-phosphate = dihydroxyacetone phosphate. It functions in the pathway carbohydrate biosynthesis; gluconeogenesis. The protein operates within carbohydrate degradation; glycolysis; D-glyceraldehyde 3-phosphate from glycerone phosphate: step 1/1. Its function is as follows. Involved in the gluconeogenesis. Catalyzes stereospecifically the conversion of dihydroxyacetone phosphate (DHAP) to D-glyceraldehyde-3-phosphate (G3P). The polypeptide is Triosephosphate isomerase (Porphyromonas gingivalis (strain ATCC 33277 / DSM 20709 / CIP 103683 / JCM 12257 / NCTC 11834 / 2561)).